The primary structure comprises 559 residues: MLPGILLCSLNPRNHSKKKKSERESLETEPKDIDYWYSVQFNRDPPRFALKSENNNHHSRSKSGGDFCKKKKRGEMANKVSNFSDLIQRVTASCLLHPLSAGRQDLAVNRREEYDTEEEENEEEGEIQYEDALEKENGKDETIRAKNGRNGVSVETVQEMEMVMDEVFTAAAAMKRAYVALQEAHSPWDPEKMHDADMAMVAELRRIGSLRERFRRMRGTGSGGRRKNDAGRGMLREAVAPYEAVVKELKKEVKVKDTEIENLKEKVKVASMANGNGGKKHRLLSSRKVNCTTQIAVSPVPELFEMTMIQVKEASKSFTGILLSLMRAAHWDIAAAVRSIEAASASSDGMSASSFASSVQSSVPNQHAKFALESYICRKIFQGFDHETFYMDGSLSSLINPDQYRRDCFAQFKDMKAMDPMELLGILPTCHFGKFCSKKYLSIIHQKMEESLFGDSEQRELVVAGNHPRSQFYGEFLGLAKAVWLLHLLAFSLDPSPSHFEANRGAEFHSQYMESVVRFSDGRVPAGQVVGFPVCPGFKLSHQGKGSIIKSRVYLVPRA.

The disordered stretch occupies residues 107-127 (AVNRREEYDTEEEENEEEGEI). Residues 114-127 (YDTEEEENEEEGEI) show a composition bias toward acidic residues.

Required for red (R) and far red (FR) light-induced and phytochrome-mediated deregulation of negative gravitropism leading to randomization of hypocotyl growth orientation. The polypeptide is Protein GRAVITROPIC IN THE LIGHT 1 (Arabidopsis thaliana (Mouse-ear cress)).